The chain runs to 1204 residues: E3 ubiquitin-protein ligase DZIP3 (1204 aa).

2 disordered regions span residues 1-22 (MDSL…QTKE) and 640-681 (SIPS…EQVS). The span at 649–658 (SVKDLQEVKS) shows a compositional bias: basic and acidic residues. Positions 659–668 (KTKKKKRTKS) are enriched in basic residues. 2 coiled-coil regions span residues 746 to 861 (KETE…TSRA) and 906 to 941 (QLKA…KVKQ). Positions 1088–1098 (PKKSESEEKSA) are enriched in basic and acidic residues. A disordered region spans residues 1088-1141 (PKKSESEEKSAQDGNNASPSHTASQPNAPQDPKSAQGSATWEGDKDMDNEEEEE). Residues 1099–1126 (QDGNNASPSHTASQPNAPQDPKSAQGSA) are compositionally biased toward polar residues. Residues 1132–1141 (KDMDNEEEEE) are compositionally biased toward acidic residues. Residues 1144–1184 (CVICHENLSPENLSVLPCAHKFHSQCIRPWLMQQGTCPTCR) form an RING-type; atypical zinc finger.

As to quaternary structure, probably interacts with DAZL.

The protein localises to the cytoplasm. It carries out the reaction S-ubiquitinyl-[E2 ubiquitin-conjugating enzyme]-L-cysteine + [acceptor protein]-L-lysine = [E2 ubiquitin-conjugating enzyme]-L-cysteine + N(6)-ubiquitinyl-[acceptor protein]-L-lysine.. Its pathway is protein modification; protein ubiquitination. E3 Ubiquitin ligase proteins mediate ubiquitination and subsequent proteasomal degradation of target proteins. E3 ubiquitin ligases accept ubiquitin from an E2 ubiquitin-conjugating enzyme in the form of a thioester and then directly transfers the ubiquitin to targeted substrates. Able to specifically bind RNA. This is E3 ubiquitin-protein ligase DZIP3 (Dzip3) from Mus musculus (Mouse).